A 1681-amino-acid chain; its full sequence is Meiosis regulator and mRNA stability factor 1 (1681 aa).

The region spanning 340 to 477 (IGVFWDIENC…ALLHHAHELI (138 aa)) is the NYN domain. 2 disordered regions span residues 576–595 (VNETKNSCVSNEKAKSPKKV) and 638–717 (QMQS…DVVF). The segment covering 638 to 647 (QMQSKSNKTS) has biased composition (polar residues). The segment covering 648-658 (QQEKDKKRNGD) has biased composition (basic and acidic residues). The span at 659–690 (KQGTLSQSSPLCTNQMLQTARNVGTDNTASKS) shows a compositional bias: polar residues. Residues 692 to 715 (QKRDDTTRKSNADSQKEQKNKEDV) are compositionally biased toward basic and acidic residues. The region spanning 779 to 858 (ADIQIGNLDY…KRIQVSLATG (80 aa)) is the RRM domain. 8 consecutive HTH OST-type domains span residues 863–937 (SLSL…SPMG), 991–1067 (SLKT…HNKP), 1087–1161 (QLIQ…LTHR), 1163–1238 (QVKR…IPKR), 1247–1321 (RTKQ…LTEM), 1323–1398 (RIKA…INRK), 1399–1472 (SLRS…SVQL), and 1474–1548 (SLYV…LKND). Residues 1637-1648 (EPSTQNICPQES) are compositionally biased toward polar residues. A disordered region spans residues 1637-1662 (EPSTQNICPQESKSTKELPESPVKRQ). Positions 1649–1659 (KSTKELPESPV) are enriched in basic and acidic residues.

It localises to the peroxisome. In terms of biological role, essential regulator of oogenesis required for female meiotic progression to repress transposable elements and preventing their mobilization, which is essential for the germline integrity. This Xenopus tropicalis (Western clawed frog) protein is Meiosis regulator and mRNA stability factor 1.